We begin with the raw amino-acid sequence, 112 residues long: Protein NIM1-INTERACTING 3 (112 aa).

2 disordered regions span residues Met-1–Met-20 and Glu-77–Leu-112. Coiled-coil stretches lie at residues Met-1–Lys-35 and Asn-69–Lys-96. The span at Glu-77–Glu-89 shows a compositional bias: low complexity.

The protein belongs to the NPR1-interactor family. Interacts with NPR1 C-terminal region.

It localises to the nucleus. This chain is Protein NIM1-INTERACTING 3, found in Arabidopsis thaliana (Mouse-ear cress).